We begin with the raw amino-acid sequence, 639 residues long: Putative cyclic beta-1,2-glucan modification protein (639 aa).

Helical transmembrane passes span alanine 34–tryptophan 54, proline 69–glycine 89, leucine 96–leucine 116, tryptophan 144–leucine 164, phenylalanine 185–isoleucine 205, and phenylalanine 227–methionine 247.

It localises to the cell membrane. In Rhizobium meliloti (strain 1021) (Ensifer meliloti), this protein is Putative cyclic beta-1,2-glucan modification protein (cgmA).